The chain runs to 205 residues: RNA pyrophosphohydrolase (205 aa).

Residues 6 to 149 (GFRPNVGIVL…KRGVYARALR (144 aa)) form the Nudix hydrolase domain. A Nudix box motif is present at residues 38–59 (GGMNTDETPVEAMYRELREETG). A disordered region spans residues 178-205 (GSSAAGHDSPRKRPRKRNGARAMRINND). Over residues 187–196 (PRKRPRKRNG) the composition is skewed to basic residues.

It belongs to the Nudix hydrolase family. RppH subfamily. A divalent metal cation is required as a cofactor.

Functionally, accelerates the degradation of transcripts by removing pyrophosphate from the 5'-end of triphosphorylated RNA, leading to a more labile monophosphorylated state that can stimulate subsequent ribonuclease cleavage. This is RNA pyrophosphohydrolase from Xanthomonas axonopodis pv. citri (strain 306).